A 388-amino-acid chain; its full sequence is Gastricsin (388 aa).

The first 16 residues, 1-16 (MKWMVVAFICLQLLEA), serve as a signal peptide directing secretion. The propeptide at 17–59 (TVVKVPLKKFKSIRETMKEKGLLWEFLKTHKHDPARKYRVSDL) is activation peptide. In terms of domain architecture, Peptidase A1 spans 73-385 (YFGEISIGTP…DLGNNRVGFA (313 aa)). Asp-91 is an active-site residue. 2 disulfide bridges follow: Cys-104/Cys-109 and Cys-267/Cys-271. Residue Asp-276 is part of the active site. Cys-310 and Cys-343 are oxidised to a cystine.

The protein belongs to the peptidase A1 family.

The protein localises to the secreted. The catalysed reaction is More restricted specificity than pepsin A, but shows preferential cleavage at Tyr-|-Xaa bonds. High activity on hemoglobin.. Inhibited by pepstatin. In terms of biological role, hydrolyzes a variety of proteins. This is Gastricsin (PGC) from Callithrix jacchus (White-tufted-ear marmoset).